The primary structure comprises 445 residues: Phosphoglucosamine mutase 1 (445 aa).

The Phosphoserine intermediate role is filled by Ser102. Residues Ser102, Asp241, Asp243, and Asp245 each contribute to the Mg(2+) site. Ser102 is modified (phosphoserine).

Belongs to the phosphohexose mutase family. Requires Mg(2+) as cofactor. Post-translationally, activated by phosphorylation.

It carries out the reaction alpha-D-glucosamine 1-phosphate = D-glucosamine 6-phosphate. Catalyzes the conversion of glucosamine-6-phosphate to glucosamine-1-phosphate. This chain is Phosphoglucosamine mutase 1, found in Shewanella amazonensis (strain ATCC BAA-1098 / SB2B).